Reading from the N-terminus, the 316-residue chain is 4-hydroxy-3-methylbut-2-enyl diphosphate reductase (316 aa).

Cys12 contacts [4Fe-4S] cluster. (2E)-4-hydroxy-3-methylbut-2-enyl diphosphate contacts are provided by His41 and His74. The dimethylallyl diphosphate site is built by His41 and His74. Isopentenyl diphosphate-binding residues include His41 and His74. Cys96 is a binding site for [4Fe-4S] cluster. Residue His124 coordinates (2E)-4-hydroxy-3-methylbut-2-enyl diphosphate. Residue His124 coordinates dimethylallyl diphosphate. His124 contributes to the isopentenyl diphosphate binding site. Glu126 (proton donor) is an active-site residue. Thr167 contacts (2E)-4-hydroxy-3-methylbut-2-enyl diphosphate. Cys197 contributes to the [4Fe-4S] cluster binding site. Residues Ser225, Ser226, Asn227, and Ser269 each contribute to the (2E)-4-hydroxy-3-methylbut-2-enyl diphosphate site. Dimethylallyl diphosphate-binding residues include Ser225, Ser226, Asn227, and Ser269. The isopentenyl diphosphate site is built by Ser225, Ser226, Asn227, and Ser269.

The protein belongs to the IspH family. As to quaternary structure, homodimer. [4Fe-4S] cluster serves as cofactor.

The catalysed reaction is isopentenyl diphosphate + 2 oxidized [2Fe-2S]-[ferredoxin] + H2O = (2E)-4-hydroxy-3-methylbut-2-enyl diphosphate + 2 reduced [2Fe-2S]-[ferredoxin] + 2 H(+). It catalyses the reaction dimethylallyl diphosphate + 2 oxidized [2Fe-2S]-[ferredoxin] + H2O = (2E)-4-hydroxy-3-methylbut-2-enyl diphosphate + 2 reduced [2Fe-2S]-[ferredoxin] + 2 H(+). Its pathway is isoprenoid biosynthesis; dimethylallyl diphosphate biosynthesis; dimethylallyl diphosphate from (2E)-4-hydroxy-3-methylbutenyl diphosphate: step 1/1. It participates in isoprenoid biosynthesis; isopentenyl diphosphate biosynthesis via DXP pathway; isopentenyl diphosphate from 1-deoxy-D-xylulose 5-phosphate: step 6/6. In terms of biological role, catalyzes the conversion of 1-hydroxy-2-methyl-2-(E)-butenyl 4-diphosphate (HMBPP) into a mixture of isopentenyl diphosphate (IPP) and dimethylallyl diphosphate (DMAPP). Acts in the terminal step of the DOXP/MEP pathway for isoprenoid precursor biosynthesis. This is 4-hydroxy-3-methylbut-2-enyl diphosphate reductase from Klebsiella pneumoniae (strain 342).